The sequence spans 665 residues: Macrolide export ATP-binding/permease protein MacB (665 aa).

The ABC transporter domain occupies 17–255 (MQVKGLIREF…VAQFSSIIDK (239 aa)). 53–60 (GQSGSGKS) lines the ATP pocket. A run of 4 helical transmembrane segments spans residues 287–307 (LLTM…VGLG), 544–564 (IAII…LVSV), 588–608 (FLIE…GMAF), and 630–650 (SIIA…FLPA).

It belongs to the ABC transporter superfamily. Macrolide exporter (TC 3.A.1.122) family. As to quaternary structure, homodimer. Part of the tripartite efflux system MacAB-TolC, which is composed of an inner membrane transporter, MacB, a periplasmic membrane fusion protein, MacA, and an outer membrane component, TolC. The complex forms a large protein conduit and can translocate molecules across both the inner and outer membranes. Interacts with MacA.

It is found in the cell inner membrane. Its function is as follows. Part of the tripartite efflux system MacAB-TolC. MacB is a non-canonical ABC transporter that contains transmembrane domains (TMD), which form a pore in the inner membrane, and an ATP-binding domain (NBD), which is responsible for energy generation. Confers resistance against macrolides. The chain is Macrolide export ATP-binding/permease protein MacB from Psychrobacter arcticus (strain DSM 17307 / VKM B-2377 / 273-4).